The following is a 474-amino-acid chain: UDP-N-acetylmuramate--L-alanine ligase (474 aa).

An ATP-binding site is contributed by 108–114; the sequence is GTHGKTT.

This sequence belongs to the MurCDEF family.

Its subcellular location is the cytoplasm. It carries out the reaction UDP-N-acetyl-alpha-D-muramate + L-alanine + ATP = UDP-N-acetyl-alpha-D-muramoyl-L-alanine + ADP + phosphate + H(+). Its pathway is cell wall biogenesis; peptidoglycan biosynthesis. In terms of biological role, cell wall formation. This is UDP-N-acetylmuramate--L-alanine ligase from Chloroflexus aggregans (strain MD-66 / DSM 9485).